The primary structure comprises 188 residues: Ribosome maturation factor RimM (188 aa).

The PRC barrel domain occupies 93-175 (QDEFYFTDLI…EIEVQGDLSD (83 aa)).

The protein belongs to the RimM family. Binds ribosomal protein uS19.

It is found in the cytoplasm. Its function is as follows. An accessory protein needed during the final step in the assembly of 30S ribosomal subunit, possibly for assembly of the head region. Essential for efficient processing of 16S rRNA. May be needed both before and after RbfA during the maturation of 16S rRNA. It has affinity for free ribosomal 30S subunits but not for 70S ribosomes. The protein is Ribosome maturation factor RimM of Gluconacetobacter diazotrophicus (strain ATCC 49037 / DSM 5601 / CCUG 37298 / CIP 103539 / LMG 7603 / PAl5).